The sequence spans 151 residues: Histone H2A.2.2 (151 aa).

At Met1 the chain carries N-acetylmethionine. Positions 129–151 are disordered; sequence EKAEKAGTKAKSPKKATKSPKKA. The segment covering 139–151 has biased composition (basic residues); it reads KSPKKATKSPKKA. Short sequence motifs (SPKK motif) lie at residues 140–143 and 147–150; these read SPKK.

This sequence belongs to the histone H2A family. The nucleosome is a histone octamer containing two molecules each of H2A, H2B, H3 and H4 assembled in one H3-H4 heterotetramer and two H2A-H2B heterodimers. The octamer wraps approximately 147 bp of DNA. In terms of processing, phosphorylated within its C-terminal part, probably at the SPKK motifs.

It localises to the nucleus. It is found in the chromosome. In terms of biological role, core component of nucleosome. Nucleosomes wrap and compact DNA into chromatin, limiting DNA accessibility to the cellular machineries which require DNA as a template. Histones thereby play a central role in transcription regulation, DNA repair, DNA replication and chromosomal stability. DNA accessibility is regulated via a complex set of post-translational modifications of histones, also called histone code, and nucleosome remodeling. The sequence is that of Histone H2A.2.2 from Triticum aestivum (Wheat).